The chain runs to 616 residues: Coagulation factor XII (616 aa).

A signal peptide spans 1 to 19 (MRALLLLGILLVSLESALL). Positions 42–90 (VTGEPCHFPFQYYRQLYYKCIQRGQRGPRPWCATTPNFEKDQRWAYCLE) constitute a Fibronectin type-II domain. 13 disulfide bridges follow: Cys47–Cys73, Cys61–Cys88, Cys98–Cys110, Cys104–Cys119, Cys121–Cys130, Cys135–Cys163, Cys161–Cys170, Cys178–Cys189, Cys183–Cys198, Cys200–Cys209, Cys217–Cys295, Cys238–Cys277, and Cys266–Cys290. Residues 94 to 131 (VKDHCNKGNPCQKGGTCVNMPNGPHCICPDHFTGKHCQ) form the EGF-like 1 domain. Residue Thr109 is glycosylated (O-linked (Fuc) threonine). The Fibronectin type-I domain occupies 133–173 (EKCFEPQFLQFFQENEIWHRFEPAGVSKCQCKGPKAQCKPV). In terms of domain architecture, EGF-like 2 spans 174–210 (ASQVCSTNPCLNGGSCLQTEGHRLCRCPTGYAGRLCD). The region spanning 216 to 295 (RCYSDRGLSY…SWQYCRLARC (80 aa)) is the Kringle domain. 3 N-linked (GlcNAc...) asparagine glycosylation sites follow: Asn249, Asn271, and Asn335. The tract at residues 303 to 342 (PPILTPTQSPSEHQDSPLLSREPQPTTQTPSQNLTSAWCA) is disordered. Positions 325-338 (PQPTTQTPSQNLTS) are enriched in polar residues. Intrachain disulfides connect Cys358-Cys485, Cys396-Cys412, Cys404-Cys474, Cys435-Cys438, Cys501-Cys570, Cys533-Cys549, and Cys560-Cys591. In terms of domain architecture, Peptidase S1 spans 372 to 615 (IVGGLVALPG…YLAWIQEHTT (244 aa)). His411 acts as the Charge relay system in catalysis. Asn432 is a glycosylation site (N-linked (GlcNAc...) asparagine). Asp460 functions as the Charge relay system in the catalytic mechanism. Ser564 acts as the Charge relay system in catalysis.

This sequence belongs to the peptidase S1 family. As to quaternary structure, interacts with HRG; the interaction, which is enhanced in the presence of zinc ions and inhibited by heparin-binding, inhibits factor XII autoactivation and contact-initiated coagulation. O- and N-glycosylated.

It is found in the secreted. The enzyme catalyses Selective cleavage of Arg-|-Ile bonds in factor VII to form factor VIIa and factor XI to form factor XIa.. Its activity is regulated as follows. Activity is promoted in the presence of negatively charged surfaces. Factor XII is a serum glycoprotein that participates in the initiation of blood coagulation, fibrinolysis, and the generation of bradykinin and angiotensin. Prekallikrein is cleaved by factor XII to form kallikrein, which then cleaves factor XII first to alpha-factor XIIa and then trypsin cleaves it to beta-factor XIIa. Alpha-factor XIIa activates factor XI to factor XIa. The chain is Coagulation factor XII (F12) from Sus scrofa (Pig).